The primary structure comprises 214 residues: Pyridoxine/pyridoxamine 5'-phosphate oxidase (214 aa).

Substrate-binding positions include 8–11 and arginine 66; that span reads RLSY. FMN-binding positions include 61–66, 76–77, lysine 83, and glutamine 105; these read RTVLLR and FT. Positions 123, 127, and 131 each coordinate substrate. Positions 126–146 are disordered; it reads SRPRESQLAAHASDPQSAPVS. Residues 141 to 142 and tryptophan 187 each bind FMN; that span reads QS. 193-195 provides a ligand contact to substrate; sequence RMH. Position 197 (arginine 197) interacts with FMN.

This sequence belongs to the pyridoxamine 5'-phosphate oxidase family. Homodimer. FMN serves as cofactor.

The catalysed reaction is pyridoxamine 5'-phosphate + O2 + H2O = pyridoxal 5'-phosphate + H2O2 + NH4(+). The enzyme catalyses pyridoxine 5'-phosphate + O2 = pyridoxal 5'-phosphate + H2O2. The protein operates within cofactor metabolism; pyridoxal 5'-phosphate salvage; pyridoxal 5'-phosphate from pyridoxamine 5'-phosphate: step 1/1. It participates in cofactor metabolism; pyridoxal 5'-phosphate salvage; pyridoxal 5'-phosphate from pyridoxine 5'-phosphate: step 1/1. Its function is as follows. Catalyzes the oxidation of either pyridoxine 5'-phosphate (PNP) or pyridoxamine 5'-phosphate (PMP) into pyridoxal 5'-phosphate (PLP). The sequence is that of Pyridoxine/pyridoxamine 5'-phosphate oxidase from Deinococcus deserti (strain DSM 17065 / CIP 109153 / LMG 22923 / VCD115).